A 148-amino-acid polypeptide reads, in one-letter code: Probable 4-amino-4-deoxy-L-arabinose-phosphoundecaprenol flippase subunit ArnF (148 aa).

At 1–23 (MRGDNTGVGKEPAVTERPAIKGY) the chain is on the cytoplasmic side. The helical transmembrane segment at 24-44 (LYVLGSILLVTLAQLAMKWGV) threads the bilayer. Residues 45–63 (MQLPAWQASLDIMLAHPVP) lie on the Periplasmic side of the membrane. Residues 64–84 (LLVITAGVGCYALSLLCWLAA) traverse the membrane as a helical segment. The Cytoplasmic portion of the chain corresponds to 85 to 91 (LHFTPLN). A helical transmembrane segment spans residues 92-112 (IAYPLLSTSYALVYLLAVSIP). The Periplasmic portion of the chain corresponds to 113–117 (SFAEP). The helical transmembrane segment at 118–138 (LEPGKAVGVIFILLGAVLVGI) threads the bilayer. At 139-148 (KPVGRKRNAH) the chain is on the cytoplasmic side.

This sequence belongs to the ArnF family. As to quaternary structure, heterodimer of ArnE and ArnF.

It localises to the cell inner membrane. It participates in bacterial outer membrane biogenesis; lipopolysaccharide biosynthesis. Functionally, translocates 4-amino-4-deoxy-L-arabinose-phosphoundecaprenol (alpha-L-Ara4N-phosphoundecaprenol) from the cytoplasmic to the periplasmic side of the inner membrane. This is Probable 4-amino-4-deoxy-L-arabinose-phosphoundecaprenol flippase subunit ArnF from Aeromonas salmonicida (strain A449).